A 1394-amino-acid chain; its full sequence is MKPVKHLLTTSNKSATLPALTSKKGLHNLPLSPKLKEKHNAKLIHDKIEPMVLRSPPTGESIVRYALPIPSSKTKNLLPGDEMIGKIIKHLKMVVSTLEETYGHCDQNGEEPFVKRENEELSLSIGDDMNSFLTCCSQFATQLETALKEEQNVCILHYFFFCPSFVFLKWFQWQVNQMEEISKDQTLLQAEPPEPDKTVTLSIAQIVRLLQRFEELKNRLKQRSKSSWKVMLSKTMDEENRPEAVKSCEAVAQKIEEFIEAHSTDEFKGVSATEPQTAHSMTNRFNTMLKVFENQANMLERAVNDQVLLDAEYKQIQRDFELLSEEKLVLENELQKLKDTEKIKSTNNRTKKAAKTVKKKDKGKSEDSEKKMSSEKEFKIKDLDQVQKVARLEIENKVLQEQLKQALQEAEKAKHQLNYFLSQERKLLKSEGKTETTMRVGNSQTEVKGEDSKTIPLEKETGKSLVSDSGGQKTSDKIQEYPQITAQSGRLIEKSSEKKRSSPAISDLSQILKSQDESAFLESSNEVSVAENQSNKSPSETRDESLTTVSSSKEVQDSLSVGTLAQKNETVMSPFILPPVLTESKKADVSEEQLQKKTEEQTYQAPEKSQAYSEVPDENLMVENKDSVTKVQVEQMKQTTSSMERREATLTTPQSPEDVVLVSRSQSETKNLEATGNESFHSHNDVPEENLMLEQDTKSKTEVEVKKQKSFQDNQLNTHNEVPNERLIVEHQESMSKTKLQVKKQETSTEQPLTTHDKEPDENLTLGHQDSMSKSEMQVKEQSTLKGQRITTHEEEPGKNLALEHQDSLSKLEMQIKKNEKLPREKRHSTHGEESSENPMLKHQDAVSKIQVQLEKQETSEGGRSIPDKNSMFVHQDSVSKLQMQEKKKVTPGRERRNTHIVVPNENVVSVHQDSKSKLQMQEKKQINPGVEKHKTFPFEIQKKDISLEHLLPEEKVLLSRRESQTKKLQAKVTSRKITNEAASELPNTAENLPAVYPSISDLIIRLDLNKVVETDIESLRGALGRRLLNDEFKTQPKSFPGSEIEQLTDAFGRDILKDEFKTRSKSLPETDERLRRATERGTINNAMKTQLKRKSHPETGLKHLKGVNEKDIIKDLINIQSKRHAETDKEHLADAIGRGIIKGSINAQLKGHQETDKNFFAYAIGRGVRKESIKTQLKSHPETDKEFLADAIGRGIIIGPIIRQLKSHQETDKQLLKDAIGRDIIKGPINAQLKSHQETDVEPLTNAIGSSKTIGEIKTQLRTHYDVNLFKNKDMSIQRQEGIFNRSITPSKFPTKVINLSPFENKEETYEYSSPYAIAPSKAVYRTYRASSSFSKDIHLPLLNQLHSGHSKVVTLNQKTIEFTLPSVTNTIGKPAYKVLHAAARKSVPHPYF.

Residues 308-340 (LLDAEYKQIQRDFELLSEEKLVLENELQKLKDT) are a coiled coil. Residues 345–375 (STNNRTKKAAKTVKKKDKGKSEDSEKKMSSE) form a disordered region. Positions 349-362 (RTKKAAKTVKKKDK) are enriched in basic residues. A compositionally biased stretch (basic and acidic residues) spans 363–375 (GKSEDSEKKMSSE). The stretch at 383 to 421 (LDQVQKVARLEIENKVLQEQLKQALQEAEKAKHQLNYFL) forms a coiled coil. 3 disordered regions span residues 431 to 617 (EGKT…EVPD), 634 to 806 (EQMK…LEHQ), and 819 to 842 (NEKL…PMLK). Positions 437–446 (TMRVGNSQTE) are enriched in polar residues. The segment covering 447–462 (VKGEDSKTIPLEKETG) has biased composition (basic and acidic residues). Over residues 464–473 (SLVSDSGGQK) the composition is skewed to polar residues. The span at 491–500 (LIEKSSEKKR) shows a compositional bias: basic and acidic residues. Polar residues-rich tracts occupy residues 503–513 (PAISDLSQILK), 521–538 (LESS…NKSP), and 546–571 (LTTV…NETV). The segment covering 583–600 (ESKKADVSEEQLQKKTEE) has biased composition (basic and acidic residues). Residues 663 to 679 (SRSQSETKNLEATGNES) are compositionally biased toward polar residues. Residues 695–707 (QDTKSKTEVEVKK) show a composition bias toward basic and acidic residues. Residues 711-721 (FQDNQLNTHNE) are compositionally biased toward polar residues. Basic and acidic residues predominate over residues 722–736 (VPNERLIVEHQESMS). Positions 780-790 (KEQSTLKGQRI) are enriched in polar residues. Composition is skewed to basic and acidic residues over residues 791–806 (TTHE…LEHQ) and 830–842 (THGE…PMLK).

Functionally, may play a role in tumorigenesis. In Macaca fascicularis (Crab-eating macaque), this protein is Coiled-coil domain-containing protein 7 (CCDC7).